The following is a 129-amino-acid chain: DNA-directed RNA polymerase subunit omega (129 aa).

Positions 76 to 101 (EVDEPEPDPVTLAASAADGEDDDQPE) are disordered.

It belongs to the RNA polymerase subunit omega family. The RNAP catalytic core consists of 2 alpha, 1 beta, 1 beta' and 1 omega subunit. When a sigma factor is associated with the core the holoenzyme is formed, which can initiate transcription.

It catalyses the reaction RNA(n) + a ribonucleoside 5'-triphosphate = RNA(n+1) + diphosphate. Its function is as follows. Promotes RNA polymerase assembly. Latches the N- and C-terminal regions of the beta' subunit thereby facilitating its interaction with the beta and alpha subunits. This Agrobacterium fabrum (strain C58 / ATCC 33970) (Agrobacterium tumefaciens (strain C58)) protein is DNA-directed RNA polymerase subunit omega.